A 59-amino-acid polypeptide reads, in one-letter code: Large ribosomal subunit protein eL29 (59 aa).

Over residues 1 to 26 the composition is skewed to basic residues; the sequence is MAKSKNHTAHNQTRKAHRNGIKKPKT. Residues 1–37 form a disordered region; that stretch reads MAKSKNHTAHNQTRKAHRNGIKKPKTYKYPSLKGVDP. Lys-52 participates in a covalent cross-link: Glycyl lysine isopeptide (Lys-Gly) (interchain with G-Cter in ubiquitin).

It belongs to the eukaryotic ribosomal protein eL29 family. Component of the large ribosomal subunit (LSU). Mature yeast ribosomes consist of a small (40S) and a large (60S) subunit. The 40S small subunit contains 1 molecule of ribosomal RNA (18S rRNA) and 33 different proteins (encoded by 57 genes). The large 60S subunit contains 3 rRNA molecules (25S, 5.8S and 5S rRNA) and 46 different proteins (encoded by 81 genes).

The protein localises to the cytoplasm. Component of the ribosome, a large ribonucleoprotein complex responsible for the synthesis of proteins in the cell. The small ribosomal subunit (SSU) binds messenger RNAs (mRNAs) and translates the encoded message by selecting cognate aminoacyl-transfer RNA (tRNA) molecules. The large subunit (LSU) contains the ribosomal catalytic site termed the peptidyl transferase center (PTC), which catalyzes the formation of peptide bonds, thereby polymerizing the amino acids delivered by tRNAs into a polypeptide chain. The nascent polypeptides leave the ribosome through a tunnel in the LSU and interact with protein factors that function in enzymatic processing, targeting, and the membrane insertion of nascent chains at the exit of the ribosomal tunnel. This Saccharomyces cerevisiae (strain ATCC 204508 / S288c) (Baker's yeast) protein is Large ribosomal subunit protein eL29.